The chain runs to 514 residues: 2-isopropylmalate synthase (514 aa).

The region spanning 5–268 is the Pyruvate carboxyltransferase domain; sequence LIIFDTTLRD…DVGLDTTQIV (264 aa). Positions 14, 202, 204, and 239 each coordinate Mn(2+). The tract at residues 395–514 is regulatory domain; sequence KFVSLSQRSE…KDDKLNPQRS (120 aa).

This sequence belongs to the alpha-IPM synthase/homocitrate synthase family. LeuA type 1 subfamily. As to quaternary structure, homodimer. The cofactor is Mn(2+).

The protein resides in the cytoplasm. The catalysed reaction is 3-methyl-2-oxobutanoate + acetyl-CoA + H2O = (2S)-2-isopropylmalate + CoA + H(+). The protein operates within amino-acid biosynthesis; L-leucine biosynthesis; L-leucine from 3-methyl-2-oxobutanoate: step 1/4. Catalyzes the condensation of the acetyl group of acetyl-CoA with 3-methyl-2-oxobutanoate (2-ketoisovalerate) to form 3-carboxy-3-hydroxy-4-methylpentanoate (2-isopropylmalate). The protein is 2-isopropylmalate synthase of Burkholderia ambifaria (strain MC40-6).